The following is a 378-amino-acid chain: Spermidine/putrescine import ATP-binding protein PotA (378 aa).

The ABC transporter domain occupies 18–248 (VQLAGIRKCF…PKNLFVAGFI (231 aa)). 50–57 (GPSGCGKT) is an ATP binding site.

It belongs to the ABC transporter superfamily. Spermidine/putrescine importer (TC 3.A.1.11.1) family. In terms of assembly, the complex is composed of two ATP-binding proteins (PotA), two transmembrane proteins (PotB and PotC) and a solute-binding protein (PotD).

The protein localises to the cell inner membrane. The catalysed reaction is ATP + H2O + polyamine-[polyamine-binding protein]Side 1 = ADP + phosphate + polyamineSide 2 + [polyamine-binding protein]Side 1.. Part of the ABC transporter complex PotABCD involved in spermidine/putrescine import. Responsible for energy coupling to the transport system. In Shigella dysenteriae serotype 1 (strain Sd197), this protein is Spermidine/putrescine import ATP-binding protein PotA.